We begin with the raw amino-acid sequence, 565 residues long: Sulfite reductase [NADPH] hemoprotein beta-component (565 aa).

Cysteine 429, cysteine 435, cysteine 474, and cysteine 478 together coordinate [4Fe-4S] cluster. Cysteine 478 provides a ligand contact to siroheme.

This sequence belongs to the nitrite and sulfite reductase 4Fe-4S domain family. Alpha(8)-beta(8). The alpha component is a flavoprotein, the beta component is a hemoprotein. Requires siroheme as cofactor. It depends on [4Fe-4S] cluster as a cofactor.

The catalysed reaction is hydrogen sulfide + 3 NADP(+) + 3 H2O = sulfite + 3 NADPH + 4 H(+). The protein operates within sulfur metabolism; hydrogen sulfide biosynthesis; hydrogen sulfide from sulfite (NADPH route): step 1/1. Component of the sulfite reductase complex that catalyzes the 6-electron reduction of sulfite to sulfide. This is one of several activities required for the biosynthesis of L-cysteine from sulfate. The sequence is that of Sulfite reductase [NADPH] hemoprotein beta-component from Shewanella pealeana (strain ATCC 700345 / ANG-SQ1).